Consider the following 183-residue polypeptide: Peptidyl-tRNA hydrolase (183 aa).

Tyr14 lines the tRNA pocket. Residue His19 is the Proton acceptor of the active site. Residues Phe64 and Asn66 each contribute to the tRNA site.

This sequence belongs to the PTH family. In terms of assembly, monomer.

It is found in the cytoplasm. The catalysed reaction is an N-acyl-L-alpha-aminoacyl-tRNA + H2O = an N-acyl-L-amino acid + a tRNA + H(+). Hydrolyzes ribosome-free peptidyl-tRNAs (with 1 or more amino acids incorporated), which drop off the ribosome during protein synthesis, or as a result of ribosome stalling. Functionally, catalyzes the release of premature peptidyl moieties from peptidyl-tRNA molecules trapped in stalled 50S ribosomal subunits, and thus maintains levels of free tRNAs and 50S ribosomes. The polypeptide is Peptidyl-tRNA hydrolase (Syntrophomonas wolfei subsp. wolfei (strain DSM 2245B / Goettingen)).